The sequence spans 416 residues: Isocitrate dehydrogenase [NADP] (416 aa).

Residues 77–79 (TIT) and Arg84 contribute to the NADP(+) site. Thr79 is a substrate binding site. Substrate contacts are provided by residues 96–102 (SPNGTIR), Arg111, and Arg134. Asp254 is a Mn(2+) binding site. An NADP(+)-binding site is contributed by Lys262. Asp277 contacts Mn(2+). Residues 312-317 (GTVTRH) and Asn330 each bind NADP(+).

This sequence belongs to the isocitrate and isopropylmalate dehydrogenases family. Heterodimer. Mg(2+) serves as cofactor. The cofactor is Mn(2+).

It is found in the cytoplasm. It carries out the reaction D-threo-isocitrate + NADP(+) = 2-oxoglutarate + CO2 + NADPH. In terms of biological role, may supply 2-oxoglutarate for amino acid biosynthesis and ammonia assimilation via the glutamine synthetase/glutamate synthase (GS/GOGAT) pathway. The polypeptide is Isocitrate dehydrogenase [NADP] (ICDH-1) (Solanum tuberosum (Potato)).